Reading from the N-terminus, the 177-residue chain is Meiotic chromosome segregation protein C17A2.07c (177 aa).

Positions 71–90 (EDDSINKPTEEADEAPRTQL) are disordered. Residues 74 to 86 (SINKPTEEADEAP) show a composition bias toward basic and acidic residues.

It is found in the nucleus. Functionally, involved in meiotic chromosome segregation. The chain is Meiotic chromosome segregation protein C17A2.07c from Schizosaccharomyces pombe (strain 972 / ATCC 24843) (Fission yeast).